The following is a 458-amino-acid chain: L-hydantoinase (458 aa).

His-60, His-62, Lys-147, His-183, His-239, and Asp-312 together coordinate Zn(2+). Lys-147 is modified (N6-carboxylysine).

As to quaternary structure, homotetramer. It depends on Zn(2+) as a cofactor. In terms of processing, carboxylation allows a single lysine to coordinate two zinc ions.

Its function is as follows. Rather more predominant for the cleavage of aryl- than for alkyl-hydantoin derivatives. The stereoselectivity of this enzyme depends on the substrate used for bioconversion: strictly L-selective for the cleavage of D,L-5-indolylmethylhydantoin, but D-selective for the hydrolysis of D,L-methylthioethylhydantoin. In Paenarthrobacter aurescens (Arthrobacter aurescens), this protein is L-hydantoinase (lhyD).